A 51-amino-acid polypeptide reads, in one-letter code: Large ribosomal subunit protein eL39 (51 aa).

The protein belongs to the eukaryotic ribosomal protein eL39 family. In terms of assembly, interacts with IMPACT.

This chain is Large ribosomal subunit protein eL39 (RPL39), found in Gallus gallus (Chicken).